A 257-amino-acid chain; its full sequence is Granzyme M (257 aa).

An N-terminal signal peptide occupies residues 1–23 (MEACVSSLLVLALGALSVGSSFG). The propeptide at 24-25 (TQ) is activation peptide. One can recognise a Peptidase S1 domain in the interval 26–254 (IIGGREVIPH…YVSWIRKVTG (229 aa)). A disulfide bridge connects residues C51 and C67. Catalysis depends on charge relay system residues H66 and D111. 3 disulfides stabilise this stretch: C145–C213, C176–C192, and C203–C230. A glycan (N-linked (GlcNAc...) asparagine) is linked at N177. Residue S207 is the Charge relay system of the active site.

It belongs to the peptidase S1 family. Granzyme subfamily. In terms of tissue distribution, highly and constitutively expressed in activated natural killer (NK) cells.

Its subcellular location is the secreted. The protein localises to the cytoplasmic granule. In terms of biological role, cleaves peptide substrates after methionine, leucine, and norleucine. Physiological substrates include EZR, alpha-tubulins and the apoptosis inhibitor BIRC5/Survivin. Promotes caspase activation and subsequent apoptosis of target cells. The protein is Granzyme M (GZMM) of Homo sapiens (Human).